Here is an 87-residue protein sequence, read N- to C-terminus: Homeotic protein ultrabithorax (87 aa).

The Antp-type hexapeptide signature appears at 22-27 (FYPWMA).

The protein belongs to the Antp homeobox family. In the embryo, expression is seen in the epidermis, somatic and visceral mesoderm, and the peripheral and central nervous system.

The protein resides in the nucleus. In terms of biological role, sequence-specific transcription factor which is part of a developmental regulatory system that provides cells with specific positional identities on the anterior-posterior axis. Binds the consensus region 5'-TTAAT[GT][GA]-3'. This homeotic protein controls development of the cells in the posterior thoracic and first abdominal segments. It activates the synthesis of the decapentaplegic (DPP) growth factor. In Drosophila hydei (Fruit fly), this protein is Homeotic protein ultrabithorax (Ubx).